The primary structure comprises 181 residues: D-lyxose/D-mannose isomerase (181 aa).

Mn(2+) is bound by residues histidine 75, histidine 77, glutamate 88, and histidine 143.

Belongs to the D-lyxose ketol-isomerase family. As to quaternary structure, homodimer. The cofactor is Mn(2+).

The catalysed reaction is D-lyxose = D-xylulose. The enzyme catalyses D-mannose = D-fructose. Sugar isomerase that catalyzes the reversible isomerization of D-lyxose to D-xylulose, and D-mannose to D-fructose. Shows optimum activity using D-lyxose as substrate, but can also effectively catalyze the isomerization between D-fructose and D-mannose. The protein is D-lyxose/D-mannose isomerase of Thermosediminibacter oceani (strain ATCC BAA-1034 / DSM 16646 / JW/IW-1228P).